Here is a 137-residue protein sequence, read N- to C-terminus: Cofilin (137 aa).

The ADF-H domain occupies 5-135; sequence GVKVSPECLE…AYETVLEKVT (131 aa).

Belongs to the actin-binding proteins ADF family.

Its subcellular location is the cytoplasm. It localises to the cytoskeleton. The protein localises to the nucleus matrix. In terms of biological role, controls reversibly actin polymerization and depolymerization in a pH-sensitive manner. It has the ability to bind G- and F-actin in a 1:1 ratio of cofilin to actin. Binding to F-actin is regulated by tropomyosin. It is the major component of intranuclear and cytoplasmic actin rods. Required for accumulation of actin at the cell division site via depolymerizing actin at the cell ends. In association with myosin II has a role in the assembly of the contractile ring via severing actin filaments. Involved in the maintenance of the contractile ring once formed. In association with profilin and capping protein, has a role in the mitotic reorganization of the actin cytoskeleton. Severs actin filaments (F-actin). In Schizosaccharomyces pombe (strain 972 / ATCC 24843) (Fission yeast), this protein is Cofilin (cof1).